We begin with the raw amino-acid sequence, 299 residues long: Riboflavin transporter ImpX (299 aa).

EamA domains lie at 6–144 and 162–294; these read KGAL…YLLT and SLYS…SIIK. The next 10 membrane-spanning stretches (helical) occupy residues 7–27, 34–54, 68–88, 101–121, 129–149, 158–178, 202–222, 224–244, 253–273, and 276–296; these read GALL…ALTP, VPFV…ILFG, DLFF…LCIV, VVTL…RLLL, YLFW…EFHL, LLPA…ATVF, IMFV…ATAG, WLIF…LYYF, VATM…YLIN, and VLSP…IKIS.

The protein belongs to the EamA transporter family.

The protein resides in the cell membrane. In terms of biological role, transports riboflavin into the cell. The protein is Riboflavin transporter ImpX of Fusobacterium nucleatum subsp. nucleatum (strain ATCC 23726 / VPI 4351).